The sequence spans 134 residues: Insulin-like peptide 4 (134 aa).

An N-terminal signal peptide occupies residues 1 to 26; sequence MSLIRLGLALLLLLATVSQLLQPVQG. 3 disulfide bridges follow: C31/C120, C43/C133, and C119/C124. Positions 54–108 are cleaved as a propeptide — connecting peptide; sequence SSASKDARVRDLIRKLQQPDEDIEQETETGRLKQKHTDADTEKGVPPAVGSGRKL. The interval 72–107 is disordered; that stretch reads PDEDIEQETETGRLKQKHTDADTEKGVPPAVGSGRK. Over residues 81–96 the composition is skewed to basic and acidic residues; it reads ETGRLKQKHTDADTEK.

It belongs to the insulin family. As to quaternary structure, heterodimer of a B chain and an A chain linked by two disulfide bonds. In terms of tissue distribution, expressed at a high level in the embryonic mesoderm, with expression continuing after gastrulation and reducing from stage 12 onwards. Highly expressed in the embryonic anterior midgut rudiment and larval midgut.

Its subcellular location is the secreted. In terms of biological role, possible ligand of InR/insulin-like receptor. The protein is Insulin-like peptide 4 of Drosophila melanogaster (Fruit fly).